Consider the following 247-residue polypeptide: Caffeoyl-CoA O-methyltransferase (247 aa).

Substrate is bound at residue Lys-21. S-adenosyl-L-methionine is bound by residues Thr-63, Glu-85, Gly-87–Val-88, Ser-93, Asp-111, and Ala-140. Substrate is bound at residue Asp-163. Residue Asp-163 participates in a divalent metal cation binding. Asp-165 is a binding site for S-adenosyl-L-methionine. A divalent metal cation contacts are provided by Asp-189 and Asn-190. Asn-194 contributes to the substrate binding site.

This sequence belongs to the class I-like SAM-binding methyltransferase superfamily. Cation-dependent O-methyltransferase family. CCoAMT subfamily. The cofactor is a divalent metal cation.

It catalyses the reaction (E)-caffeoyl-CoA + S-adenosyl-L-methionine = (E)-feruloyl-CoA + S-adenosyl-L-homocysteine + H(+). It participates in aromatic compound metabolism; phenylpropanoid biosynthesis. Methylates caffeoyl-CoA to feruloyl-CoA and 5-hydroxyferuloyl-CoA to sinapoyl-CoA. Plays a role in the synthesis of feruloylated polysaccharides. Involved in the reinforcement of the plant cell wall. Also involved in the responding to wounding or pathogen challenge by the increased formation of cell wall-bound ferulic acid polymers. The sequence is that of Caffeoyl-CoA O-methyltransferase from Populus tremuloides (Quaking aspen).